Reading from the N-terminus, the 632-residue chain is Transcription factor tazR (632 aa).

The zn(2)-C6 fungal-type DNA-binding region spans 20–47 (CNECRARKLRCDRVRPTCGTCESLGVTC). A disordered region spans residues 77 to 130 (WNGQQKAAGGSPGESPPCSEGGQTLRAVSESTSDGVHDEDHANGARPPSSQSSI).

It localises to the nucleus. Transcription factor that regulates the expression of the gene cluster that mediates the biosynthesis of azaterrilone A and other azaphilones, a class of fungal metabolites characterized by a highly oxygenated pyrano-quinone bicyclic core and exhibiting a broad range of bioactivities. This Aspergillus terreus (strain NIH 2624 / FGSC A1156) protein is Transcription factor tazR.